We begin with the raw amino-acid sequence, 651 residues long: Acetyl-coenzyme A synthetase (651 aa).

CoA is bound by residues 189–192, T311, and N335; that span reads RGGK. ATP contacts are provided by residues 387–389, 411–416, D500, and R515; these read GEP and DTWWQT. S523 provides a ligand contact to CoA. ATP is bound at residue R526. V537, H539, and V542 together coordinate Mg(2+). R586 provides a ligand contact to CoA. K611 is modified (N6-acetyllysine).

Belongs to the ATP-dependent AMP-binding enzyme family. It depends on Mg(2+) as a cofactor. Post-translationally, acetylated. Deacetylation by the SIR2-homolog deacetylase activates the enzyme.

It catalyses the reaction acetate + ATP + CoA = acetyl-CoA + AMP + diphosphate. Functionally, catalyzes the conversion of acetate into acetyl-CoA (AcCoA), an essential intermediate at the junction of anabolic and catabolic pathways. AcsA undergoes a two-step reaction. In the first half reaction, AcsA combines acetate with ATP to form acetyl-adenylate (AcAMP) intermediate. In the second half reaction, it can then transfer the acetyl group from AcAMP to the sulfhydryl group of CoA, forming the product AcCoA. This is Acetyl-coenzyme A synthetase from Brucella suis (strain ATCC 23445 / NCTC 10510).